Reading from the N-terminus, the 428-residue chain is Glutamine synthetase, chloroplastic (428 aa).

A chloroplast-targeting transit peptide spans 1 to 49 (MAQILAASPTCQMRLTKPSSIASSKLWNSVVLKQKKQSSSKVRSFKVMA). One can recognise a GS beta-grasp domain in the interval 75 to 155 (IIAEYIWIGG…VICDTYTPAG (81 aa)). The tract at residues 94 to 120 (RTLEKPVEDPSELPKWNYDGSSTGQAP) is disordered. Serine 104 carries the phosphoserine modification. A GS catalytic domain is found at 159 to 428 (PTNKRARAAE…LAAQKLSLKV (270 aa)).

It belongs to the glutamine synthetase family. Homooctamer.

It is found in the plastid. It localises to the chloroplast. It catalyses the reaction L-glutamate + NH4(+) + ATP = L-glutamine + ADP + phosphate + H(+). The light-modulated chloroplast enzyme, encoded by a nuclear gene and expressed primarily in leaves, is responsible for the reassimilation of the ammonia generated by photorespiration. This Brassica napus (Rape) protein is Glutamine synthetase, chloroplastic (GLN2).